The chain runs to 584 residues: A-type ATP synthase subunit A 2 (584 aa).

227–234 (GGFGTGKT) serves as a coordination point for ATP.

This sequence belongs to the ATPase alpha/beta chains family. As to quaternary structure, has multiple subunits with at least A(3), B(3), C, D, E, F, H, I and proteolipid K(x).

It localises to the cell membrane. The enzyme catalyses ATP + H2O + 4 H(+)(in) = ADP + phosphate + 5 H(+)(out). Component of the A-type ATP synthase that produces ATP from ADP in the presence of a proton gradient across the membrane. The A chain is the catalytic subunit. This Methanospirillum hungatei JF-1 (strain ATCC 27890 / DSM 864 / NBRC 100397 / JF-1) protein is A-type ATP synthase subunit A 2.